Here is a 1316-residue protein sequence, read N- to C-terminus: DNA-directed RNA polymerase subunit beta' (1316 aa).

Zn(2+) contacts are provided by C60, C62, C75, and C78. Positions 535, 537, and 539 each coordinate Mg(2+). The Zn(2+) site is built by C891, C968, C975, and C978.

This sequence belongs to the RNA polymerase beta' chain family. In terms of assembly, the RNAP catalytic core consists of 2 alpha, 1 beta, 1 beta' and 1 omega subunit. When a sigma factor is associated with the core the holoenzyme is formed, which can initiate transcription. Mg(2+) serves as cofactor. Zn(2+) is required as a cofactor.

It carries out the reaction RNA(n) + a ribonucleoside 5'-triphosphate = RNA(n+1) + diphosphate. DNA-dependent RNA polymerase catalyzes the transcription of DNA into RNA using the four ribonucleoside triphosphates as substrates. The protein is DNA-directed RNA polymerase subunit beta' of Mycobacterium tuberculosis (strain ATCC 25177 / H37Ra).